The primary structure comprises 513 residues: ATP synthase subunit alpha 1 (513 aa).

169-176 (GDRQTGKT) lines the ATP pocket.

Belongs to the ATPase alpha/beta chains family. As to quaternary structure, F-type ATPases have 2 components, CF(1) - the catalytic core - and CF(0) - the membrane proton channel. CF(1) has five subunits: alpha(3), beta(3), gamma(1), delta(1), epsilon(1). CF(0) has three main subunits: a(1), b(2) and c(9-12). The alpha and beta chains form an alternating ring which encloses part of the gamma chain. CF(1) is attached to CF(0) by a central stalk formed by the gamma and epsilon chains, while a peripheral stalk is formed by the delta and b chains.

It localises to the cell inner membrane. It carries out the reaction ATP + H2O + 4 H(+)(in) = ADP + phosphate + 5 H(+)(out). Produces ATP from ADP in the presence of a proton gradient across the membrane. The alpha chain is a regulatory subunit. This Vibrio campbellii (strain ATCC BAA-1116) protein is ATP synthase subunit alpha 1.